The chain runs to 279 residues: uncharacterized protein (279 aa).

Positions 60–92 are disordered; it reads RKANKLNNKQDSTFFNSASGETNNTILPPGVKN. Residues 70 to 85 are compositionally biased toward polar residues; it reads DSTFFNSASGETNNTI. 3 helical membrane-spanning segments follow: residues 156-176, 202-222, and 237-257; these read IVGYTNLVIVAFFAGLLAVMN, ISIFVISIVTLPFWTMFILFL, and FIWIVLIINVVLLLVSCLLMI.

It localises to the cell membrane. This is an uncharacterized protein from Mycoplasma genitalium (strain ATCC 33530 / DSM 19775 / NCTC 10195 / G37) (Mycoplasmoides genitalium).